The sequence spans 174 residues: Peptide deformylase (174 aa).

Fe cation is bound by residues Cys91 and His133. The active site involves Glu134. His137 lines the Fe cation pocket.

It belongs to the polypeptide deformylase family. The cofactor is Fe(2+).

It carries out the reaction N-terminal N-formyl-L-methionyl-[peptide] + H2O = N-terminal L-methionyl-[peptide] + formate. In terms of biological role, removes the formyl group from the N-terminal Met of newly synthesized proteins. Requires at least a dipeptide for an efficient rate of reaction. N-terminal L-methionine is a prerequisite for activity but the enzyme has broad specificity at other positions. The polypeptide is Peptide deformylase (Fusobacterium nucleatum subsp. nucleatum (strain ATCC 25586 / DSM 15643 / BCRC 10681 / CIP 101130 / JCM 8532 / KCTC 2640 / LMG 13131 / VPI 4355)).